The sequence spans 261 residues: Ice-binding protein (261 aa).

An N-terminal signal peptide occupies residues 1-20; that stretch reads MSLLSIITIGLAGLGGLVNG. Asn185 carries N-linked (GlcNAc...) asparagine glycosylation.

The protein belongs to the ice-binding protein family. In terms of assembly, homodimer. Dimerization is not required for the thermal hysteresis (TH) activity. In terms of processing, glycosylated. Glycosylation is not required for the thermal hysteresis (TH) activity. Glycosylation may increase stability and secretion of this protein.

It is found in the secreted. Confers freeze tolerance. Binds to the surface of ice crystals and inhibits their growth. Has low thermal hysteresis (TH) activity, which is the ability to lower the freezing point of an aqueous solution below its melting point. The TH activity of this protein is approximately 0.2 degrees Celsius at 50 uM and 0.3 degrees Celsius at 400 uM. This is Ice-binding protein from Leucosporidium sp. (strain AY30) (Arctic yeast).